The following is a 445-amino-acid chain: Adenylosuccinate synthetase (445 aa).

Residues 24 to 30 (GDEGKGK) and 52 to 54 (GHT) contribute to the GTP site. Catalysis depends on D25, which acts as the Proton acceptor. Positions 25 and 52 each coordinate Mg(2+). IMP contacts are provided by residues 25–28 (DEGK), 50–53 (NAGH), T147, R161, N238, T253, and R317. H53 (proton donor) is an active-site residue. Position 313-319 (313-319 (TTTGRRR)) interacts with substrate. GTP contacts are provided by residues R319, 345-347 (KLD), and 427-429 (GVG).

The protein belongs to the adenylosuccinate synthetase family. Homodimer. Mg(2+) serves as cofactor.

The protein localises to the cytoplasm. The catalysed reaction is IMP + L-aspartate + GTP = N(6)-(1,2-dicarboxyethyl)-AMP + GDP + phosphate + 2 H(+). It participates in purine metabolism; AMP biosynthesis via de novo pathway; AMP from IMP: step 1/2. In terms of biological role, plays an important role in the de novo pathway and in the salvage pathway of purine nucleotide biosynthesis. Catalyzes the first committed step in the biosynthesis of AMP from IMP. The sequence is that of Adenylosuccinate synthetase from Malassezia globosa (strain ATCC MYA-4612 / CBS 7966) (Dandruff-associated fungus).